The following is a 382-amino-acid chain: 8-amino-7-oxononanoate synthase (382 aa).

Arg26 is a binding site for substrate. 104 to 105 (GY) contacts pyridoxal 5'-phosphate. His129 is a binding site for substrate. Pyridoxal 5'-phosphate-binding positions include Ser175, 200–203 (DEAH), and 232–235 (TLSK). At Lys235 the chain carries N6-(pyridoxal phosphate)lysine. Thr345 serves as a coordination point for substrate.

Belongs to the class-II pyridoxal-phosphate-dependent aminotransferase family. BioF subfamily. As to quaternary structure, homodimer. It depends on pyridoxal 5'-phosphate as a cofactor.

The catalysed reaction is 6-carboxyhexanoyl-[ACP] + L-alanine + H(+) = (8S)-8-amino-7-oxononanoate + holo-[ACP] + CO2. The protein operates within cofactor biosynthesis; biotin biosynthesis. Functionally, catalyzes the decarboxylative condensation of pimeloyl-[acyl-carrier protein] and L-alanine to produce 8-amino-7-oxononanoate (AON), [acyl-carrier protein], and carbon dioxide. The polypeptide is 8-amino-7-oxononanoate synthase (bioF) (Mycolicibacterium smegmatis (strain ATCC 700084 / mc(2)155) (Mycobacterium smegmatis)).